The sequence spans 448 residues: Homogentisate 1,2-dioxygenase (448 aa).

His-302 serves as the catalytic Proton acceptor. Residues His-345 and Glu-351 each contribute to the Fe cation site. Homogentisate-binding residues include Tyr-360 and His-381. His-381 lines the Fe cation pocket.

This sequence belongs to the homogentisate dioxygenase family. As to quaternary structure, hexamer; dimer of trimers. Requires Fe cation as cofactor.

It carries out the reaction homogentisate + O2 = 4-maleylacetoacetate + H(+). Its pathway is amino-acid degradation; L-phenylalanine degradation; acetoacetate and fumarate from L-phenylalanine: step 4/6. Involved in the catabolism of homogentisate (2,5-dihydroxyphenylacetate or 2,5-OH-PhAc), a central intermediate in the degradation of phenylalanine and tyrosine. Catalyzes the oxidative ring cleavage of the aromatic ring of homogentisate to yield maleylacetoacetate. The protein is Homogentisate 1,2-dioxygenase of Ralstonia pickettii (strain 12J).